Here is a 715-residue protein sequence, read N- to C-terminus: Fatty acid oxidation complex subunit alpha (715 aa).

Positions 1-190 (MIYEGKAITV…KVGAVDAVVA (190 aa)) are enoyl-CoA hydratase/isomerase. Aspartate 297 contacts substrate. The 3-hydroxyacyl-CoA dehydrogenase stretch occupies residues 312–715 (HDVKQAAVLG…MAKNGQRFFN (404 aa)). Residues methionine 325, aspartate 344, 401–403 (VVE), lysine 408, and serine 430 contribute to the NAD(+) site. Catalysis depends on histidine 451, which acts as the For 3-hydroxyacyl-CoA dehydrogenase activity. Asparagine 454 provides a ligand contact to NAD(+). Residues asparagine 501 and tyrosine 660 each contribute to the substrate site.

The protein in the N-terminal section; belongs to the enoyl-CoA hydratase/isomerase family. In the C-terminal section; belongs to the 3-hydroxyacyl-CoA dehydrogenase family. Heterotetramer of two alpha chains (FadB) and two beta chains (FadA).

It carries out the reaction a (3S)-3-hydroxyacyl-CoA + NAD(+) = a 3-oxoacyl-CoA + NADH + H(+). It catalyses the reaction a (3S)-3-hydroxyacyl-CoA = a (2E)-enoyl-CoA + H2O. The enzyme catalyses a 4-saturated-(3S)-3-hydroxyacyl-CoA = a (3E)-enoyl-CoA + H2O. The catalysed reaction is (3S)-3-hydroxybutanoyl-CoA = (3R)-3-hydroxybutanoyl-CoA. It carries out the reaction a (3Z)-enoyl-CoA = a 4-saturated (2E)-enoyl-CoA. It catalyses the reaction a (3E)-enoyl-CoA = a 4-saturated (2E)-enoyl-CoA. The protein operates within lipid metabolism; fatty acid beta-oxidation. Its function is as follows. Involved in the aerobic and anaerobic degradation of long-chain fatty acids via beta-oxidation cycle. Catalyzes the formation of 3-oxoacyl-CoA from enoyl-CoA via L-3-hydroxyacyl-CoA. It can also use D-3-hydroxyacyl-CoA and cis-3-enoyl-CoA as substrate. This is Fatty acid oxidation complex subunit alpha from Pseudomonas putida (strain ATCC 700007 / DSM 6899 / JCM 31910 / BCRC 17059 / LMG 24140 / F1).